A 327-amino-acid chain; its full sequence is Acetaldehyde dehydrogenase 5 (327 aa).

15 to 18 (SGNI) contacts NAD(+). Residue Cys133 is the Acyl-thioester intermediate of the active site. Residues 164-172 (SAGPGTRAN) and Asn297 each bind NAD(+).

Belongs to the acetaldehyde dehydrogenase family.

It carries out the reaction acetaldehyde + NAD(+) + CoA = acetyl-CoA + NADH + H(+). This chain is Acetaldehyde dehydrogenase 5, found in Rhodococcus jostii (strain RHA1).